The sequence spans 56 residues: Large ribosomal subunit protein bL32 (56 aa).

The disordered stretch occupies residues 1–36; that stretch reads MAVQQNKKSRSKRGMRRSHDALSTAQLSVDATSGEV. Basic residues predominate over residues 7-16; the sequence is KKSRSKRGMR. Polar residues predominate over residues 21 to 31; it reads ALSTAQLSVDA.

Belongs to the bacterial ribosomal protein bL32 family.

This is Large ribosomal subunit protein bL32 from Shewanella oneidensis (strain ATCC 700550 / JCM 31522 / CIP 106686 / LMG 19005 / NCIMB 14063 / MR-1).